Reading from the N-terminus, the 366-residue chain is Putative F-box protein At1g26515 (366 aa).

The tract at residues 1 to 20 (MKTRSKKTKTENNQEKSKEK) is disordered. Positions 8 to 20 (TKTENNQEKSKEK) are enriched in basic and acidic residues. The F-box domain maps to 20-66 (KNKFDQLPLDLEIEIFRRLPLKSVARFLTLSKSCAATIRSPSFITSF).

The polypeptide is Putative F-box protein At1g26515 (Arabidopsis thaliana (Mouse-ear cress)).